The chain runs to 529 residues: Inosine-5'-monophosphate dehydrogenase (529 aa).

2 consecutive CBS domains span residues 129–185 (MVTD…SKQV) and 189–246 (MTKT…PLAT). Residues Asp-283 and 334 to 336 (GVG) contribute to the NAD(+) site. The K(+) site is built by Gly-336 and Gly-338. Residue Ser-339 coordinates IMP. K(+) is bound at residue Cys-341. The active-site Thioimidate intermediate is the Cys-341. Residues 374–376 (DGG), 397–398 (GS), and 421–425 (YRGMG) contribute to the IMP site. The active-site Proton acceptor is Arg-443. Glu-458 provides a ligand contact to IMP. The K(+) site is built by Glu-511, Ser-512, and His-513.

Belongs to the IMPDH/GMPR family. Homotetramer. The cofactor is K(+).

It carries out the reaction IMP + NAD(+) + H2O = XMP + NADH + H(+). It participates in purine metabolism; XMP biosynthesis via de novo pathway; XMP from IMP: step 1/1. Mycophenolic acid (MPA) is a non-competitive inhibitor that prevents formation of the closed enzyme conformation by binding to the same site as the amobile flap. In contrast, mizoribine monophosphate (MZP) is a competitive inhibitor that induces the closed conformation. MPA is a potent inhibitor of mammalian IMPDHs but a poor inhibitor of the bacterial enzymes. MZP is a more potent inhibitor of bacterial IMPDH. Functionally, catalyzes the conversion of inosine 5'-phosphate (IMP) to xanthosine 5'-phosphate (XMP), the first committed and rate-limiting step in the de novo synthesis of guanine nucleotides, and therefore plays an important role in the regulation of cell growth. The sequence is that of Inosine-5'-monophosphate dehydrogenase from Mycobacterium leprae (strain TN).